The following is a 125-amino-acid chain: Large ribosomal subunit protein bL12 (125 aa).

This sequence belongs to the bacterial ribosomal protein bL12 family. Homodimer. Part of the ribosomal stalk of the 50S ribosomal subunit. Forms a multimeric L10(L12)X complex, where L10 forms an elongated spine to which 2 to 4 L12 dimers bind in a sequential fashion. Binds GTP-bound translation factors.

Its function is as follows. Forms part of the ribosomal stalk which helps the ribosome interact with GTP-bound translation factors. Is thus essential for accurate translation. This is Large ribosomal subunit protein bL12 from Syntrophomonas wolfei subsp. wolfei (strain DSM 2245B / Goettingen).